Consider the following 277-residue polypeptide: Thiazole synthase (277 aa).

Lys119 serves as the catalytic Schiff-base intermediate with DXP. Residues Gly180, 206-207, and 228-229 contribute to the 1-deoxy-D-xylulose 5-phosphate site; these read AG and NT.

Belongs to the ThiG family. As to quaternary structure, homotetramer. Forms heterodimers with either ThiH or ThiS.

It is found in the plastid. Its subcellular location is the chloroplast. The enzyme catalyses [ThiS sulfur-carrier protein]-C-terminal-Gly-aminoethanethioate + 2-iminoacetate + 1-deoxy-D-xylulose 5-phosphate = [ThiS sulfur-carrier protein]-C-terminal Gly-Gly + 2-[(2R,5Z)-2-carboxy-4-methylthiazol-5(2H)-ylidene]ethyl phosphate + 2 H2O + H(+). It functions in the pathway cofactor biosynthesis; thiamine diphosphate biosynthesis. Its function is as follows. Catalyzes the rearrangement of 1-deoxy-D-xylulose 5-phosphate (DXP) to produce the thiazole phosphate moiety of thiamine. Sulfur is provided by the thiocarboxylate moiety of the carrier protein ThiS. In vitro, sulfur can be provided by H(2)S. The sequence is that of Thiazole synthase from Pyropia yezoensis (Susabi-nori).